Consider the following 348-residue polypeptide: Ileal sodium/bile acid cotransporter (348 aa).

Topologically, residues 1 to 28 (MNDPNSCVDNATVCSGASCVVPESNFNN) are extracellular. Asn-10 carries an N-linked (GlcNAc...) asparagine glycan. Residues 29–49 (ILSVVLSTVLTILLALVMFSM) traverse the membrane as a helical segment. The Cytoplasmic segment spans residues 50–82 (GCNVEIKKFLGHIKRPWGICVGFLCQFGIMPLT). Residues 83–103 (GFILSVAFDILPLQAVVVLII) traverse the membrane as a helical segment. At 104 to 126 (GCCPGGTASNILAYWVDGDMDLS) the chain is on the extracellular side. A helical membrane pass occupies residues 127–147 (VSMTTCSTLLALGMMPLCLLI). Residues 148–157 (YTKMWVDSGS) are Cytoplasmic-facing. The helical transmembrane segment at 158-178 (IVIPYDNIGTSLVSLVVPVSI) threads the bilayer. At 179–195 (GMFVNHKWPQKAKIILK) the chain is on the extracellular side. Residues 196 to 216 (IGSIAGAILIVLIAVVGGILY) form a helical membrane-spanning segment. The Cytoplasmic portion of the chain corresponds to 217–224 (QSAWIIAP). The helical transmembrane segment at 225–245 (KLWIIGTIFPVAGYSLGFLLA) threads the bilayer. The Extracellular portion of the chain corresponds to 246-284 (RIAGLPWYRCRTVAFETGMQNTQLCSTIVQLSFTPEELN). The helical transmembrane segment at 285-305 (VVFTFPLIYSIFQLAFAAIFL) threads the bilayer. Residues 306–348 (GFYVAYKKCHGKNKAEIPESKENGTEPESSFYKANGGFQPDEK) are Cytoplasmic-facing. Over residues 320 to 329 (AEIPESKENG) the composition is skewed to basic and acidic residues. Residues 320–348 (AEIPESKENGTEPESSFYKANGGFQPDEK) are disordered. A Phosphoserine modification is found at Ser-335.

It belongs to the bile acid:sodium symporter (BASS) (TC 2.A.28) family. Monomer and homodimer. Mainly expressed in ileum and kidney, lower expression in cecum.

Its subcellular location is the membrane. The catalysed reaction is taurocholate(out) + 2 Na(+)(out) = taurocholate(in) + 2 Na(+)(in). It carries out the reaction cholate(out) + 2 Na(+)(out) = cholate(in) + 2 Na(+)(in). It catalyses the reaction taurochenodeoxycholate(out) + 2 Na(+)(out) = taurochenodeoxycholate(in) + 2 Na(+)(in). The enzyme catalyses tauroursodeoxycholate(out) + 2 Na(+)(out) = tauroursodeoxycholate(in) + 2 Na(+)(in). The catalysed reaction is glycocholate(out) + 2 Na(+)(out) = glycocholate(in) + 2 Na(+)(in). It carries out the reaction tauronorcholate(out) + 2 Na(+)(out) = tauronorcholate(in) + 2 Na(+)(in). It catalyses the reaction tauroallocholate(out) + 2 Na(+)(out) = tauroallocholate(in) + 2 Na(+)(in). The enzyme catalyses taurodeoxycholate(out) + 2 Na(+)(out) = taurodeoxycholate(in) + 2 Na(+)(in). The catalysed reaction is tauro-beta-muricholate(out) + 2 Na(+)(out) = tauro-beta-muricholate(in) + 2 Na(+)(in). Its function is as follows. Plays a critical role in the sodium-dependent reabsorption of bile acids from the lumen of the small intestine. Transports various bile acids, unconjugated or conjugated, such as cholate and taurocholate. Also responsible for bile acid transport in the renal proximal tubules, a salvage mechanism that helps conserve bile acids. Works collaboratively with the Na(+)-taurocholate cotransporting polypeptide (NTCP), the organic solute transporter (OST), and the bile salt export pump (BSEP), to ensure efficacious biological recycling of bile acids during enterohepatic circulation. In Homo sapiens (Human), this protein is Ileal sodium/bile acid cotransporter (SLC10A2).